The primary structure comprises 200 residues: Holliday junction branch migration complex subunit RuvA (200 aa).

The tract at residues 1 to 63 (MIASVRGVVT…EDSLTLYGFA (63 aa)) is domain I. A domain II region spans residues 64-142 (DDDAKALFEL…PVPVGADSAA (79 aa)). A flexible linker region spans residues 143–151 (GVTTGAWPE). The segment at 151–200 (EQVRQALVGLGWTAAQADQAVTAVAETVDGAVPPVPVLLRQAIRLLGRTR) is domain III.

Belongs to the RuvA family. In terms of assembly, homotetramer. Forms an RuvA(8)-RuvB(12)-Holliday junction (HJ) complex. HJ DNA is sandwiched between 2 RuvA tetramers; dsDNA enters through RuvA and exits via RuvB. An RuvB hexamer assembles on each DNA strand where it exits the tetramer. Each RuvB hexamer is contacted by two RuvA subunits (via domain III) on 2 adjacent RuvB subunits; this complex drives branch migration. In the full resolvosome a probable DNA-RuvA(4)-RuvB(12)-RuvC(2) complex forms which resolves the HJ.

The protein localises to the cytoplasm. In terms of biological role, the RuvA-RuvB-RuvC complex processes Holliday junction (HJ) DNA during genetic recombination and DNA repair, while the RuvA-RuvB complex plays an important role in the rescue of blocked DNA replication forks via replication fork reversal (RFR). RuvA specifically binds to HJ cruciform DNA, conferring on it an open structure. The RuvB hexamer acts as an ATP-dependent pump, pulling dsDNA into and through the RuvAB complex. HJ branch migration allows RuvC to scan DNA until it finds its consensus sequence, where it cleaves and resolves the cruciform DNA. The protein is Holliday junction branch migration complex subunit RuvA of Salinispora tropica (strain ATCC BAA-916 / DSM 44818 / JCM 13857 / NBRC 105044 / CNB-440).